The following is a 598-amino-acid chain: UvrABC system protein C (598 aa).

The GIY-YIG domain occupies 13–92 (SSPGVYLMKD…IKKYQPRYNV (80 aa)). The region spanning 206–241 (DTTIANLEEAIKKASQEHKFEHAAALYRTLTLIRQT) is the UVR domain.

Belongs to the UvrC family. Interacts with UvrB in an incision complex.

The protein localises to the cytoplasm. Its function is as follows. The UvrABC repair system catalyzes the recognition and processing of DNA lesions. UvrC both incises the 5' and 3' sides of the lesion. The N-terminal half is responsible for the 3' incision and the C-terminal half is responsible for the 5' incision. The polypeptide is UvrABC system protein C (Chlamydia muridarum (strain MoPn / Nigg)).